The sequence spans 405 residues: Imidazolonepropionase (405 aa).

The Fe(3+) site is built by histidine 73 and histidine 75. Residues histidine 73 and histidine 75 each coordinate Zn(2+). Residues arginine 82, tyrosine 145, and histidine 178 each contribute to the 4-imidazolone-5-propanoate site. Position 145 (tyrosine 145) interacts with N-formimidoyl-L-glutamate. Histidine 243 is a binding site for Fe(3+). Residue histidine 243 coordinates Zn(2+). Position 246 (glutamine 246) interacts with 4-imidazolone-5-propanoate. A Fe(3+)-binding site is contributed by aspartate 318. Zn(2+) is bound at residue aspartate 318. Residues asparagine 320 and glycine 322 each contribute to the N-formimidoyl-L-glutamate site. Residue threonine 323 coordinates 4-imidazolone-5-propanoate.

The protein belongs to the metallo-dependent hydrolases superfamily. HutI family. The cofactor is Zn(2+). Fe(3+) serves as cofactor.

It localises to the cytoplasm. The catalysed reaction is 4-imidazolone-5-propanoate + H2O = N-formimidoyl-L-glutamate. It participates in amino-acid degradation; L-histidine degradation into L-glutamate; N-formimidoyl-L-glutamate from L-histidine: step 3/3. Functionally, catalyzes the hydrolytic cleavage of the carbon-nitrogen bond in imidazolone-5-propanoate to yield N-formimidoyl-L-glutamate. It is the third step in the universal histidine degradation pathway. The chain is Imidazolonepropionase from Brucella suis (strain ATCC 23445 / NCTC 10510).